The following is a 344-amino-acid chain: tRNA N6-adenosine threonylcarbamoyltransferase (344 aa).

Fe cation-binding residues include H119 and H123. Substrate contacts are provided by residues 141 to 145 (VVSGG), D174, G187, D191, and N280. D310 is a binding site for Fe cation.

The protein belongs to the KAE1 / TsaD family. Requires Fe(2+) as cofactor.

It localises to the cytoplasm. The catalysed reaction is L-threonylcarbamoyladenylate + adenosine(37) in tRNA = N(6)-L-threonylcarbamoyladenosine(37) in tRNA + AMP + H(+). Functionally, required for the formation of a threonylcarbamoyl group on adenosine at position 37 (t(6)A37) in tRNAs that read codons beginning with adenine. Is involved in the transfer of the threonylcarbamoyl moiety of threonylcarbamoyl-AMP (TC-AMP) to the N6 group of A37, together with TsaE and TsaB. TsaD likely plays a direct catalytic role in this reaction. This is tRNA N6-adenosine threonylcarbamoyltransferase from Listeria monocytogenes serovar 1/2a (strain ATCC BAA-679 / EGD-e).